Consider the following 450-residue polypeptide: Interferon-related developmental regulator 1 (450 aa).

Basic residues predominate over residues 1–10; that stretch reads MPKNKKRNTP. Positions 1–46 are disordered; it reads MPKNKKRNTPHRGGSGGGGSGAAATTAATAGGQHRNVQPFSDEDAS. Residues 22–32 show a composition bias toward low complexity; sequence AAATTAATAGG.

It belongs to the IFRD family. As to quaternary structure, interacts with PSIP1/LEDGF.

In terms of biological role, could play a role in regulating gene activity in the proliferative and/or differentiative pathways induced by NGF. May be an autocrine factor that attenuates or amplifies the initial ligand-induced signal. The protein is Interferon-related developmental regulator 1 (IFRD1) of Sus scrofa (Pig).